We begin with the raw amino-acid sequence, 745 residues long: Mitogen-activated protein kinase kinase kinase zak-1 (745 aa).

The 275-residue stretch at 31-305 (IQVGDHIGVG…KVMDECEKFM (275 aa)) folds into the Protein kinase domain. Residues 37-45 (IGVGTFGAV) and lysine 63 each bind ATP. Aspartate 159 serves as the catalytic Proton acceptor. The stretch at 307–352 (LEDWKTEIEKQEKNVEKMRKDLEKRREQLEIREKALKQRMKVEQAV) forms a coiled coil. Residues 366-438 (WSEHHTSHWV…MKMIRKLADT (73 aa)) enclose the SAM domain. The interval 693–745 (LTRRRRTTTTNSEDTEKSDTNNKTPESQARRVHVHGGKDKWNWKKGKSRPKFT) is disordered. The segment covering 735-745 (WKKGKSRPKFT) has biased composition (basic residues).

The protein belongs to the protein kinase superfamily. STE Ser/Thr protein kinase family. MAP kinase kinase kinase subfamily. It depends on Mg(2+) as a cofactor. In terms of tissue distribution, widely expressed; expressed in most tissues, including intestines, muscle and the nervous system.

It localises to the cytoplasm. The protein resides in the nucleus. It carries out the reaction L-seryl-[protein] + ATP = O-phospho-L-seryl-[protein] + ADP + H(+). It catalyses the reaction L-threonyl-[protein] + ATP = O-phospho-L-threonyl-[protein] + ADP + H(+). Functionally, stress-activated component of a protein kinase signal transduction cascade that promotes programmed cell death in response to ribotoxic stress. Acts as the proximal sensor of ribotoxic stress: directly binds to the ribosome, thereby acting as a sentinel for colliding ribosomes. Upon ribosome collisions, activates the stress-activated protein kinase signal transduction cascade, leading to programmed cell death. Acts by catalyzing phosphorylation of MAP kinase kinases, leading to activation of the JNK and MAP kinase p38 pathways. This chain is Mitogen-activated protein kinase kinase kinase zak-1, found in Caenorhabditis elegans.